Here is a 476-residue protein sequence, read N- to C-terminus: Casein kinase 1-like protein 7 (476 aa).

Residues 9–278 enclose the Protein kinase domain; that stretch reads FKLGKKIGSG…LKRLFRDLFI (270 aa). Residues 15–23 and Lys-38 contribute to the ATP site; that span reads IGSGSFGEL. Asp-128 (proton acceptor) is an active-site residue. Disordered stretches follow at residues 299 to 324 and 340 to 464; these read GSSSGSSSRTRHHTTAKPGFNADPIE and PGAV…TRED. The span at 357–367 shows a compositional bias: basic and acidic residues; that stretch reads PRDRSRSRNSD. Over residues 382–422 the composition is skewed to low complexity; it reads ANSSSRYRASSSRKAVAASSSRPSSAGGPSESRTSSRLVSS. A compositionally biased stretch (gly residues) spans 423–432; the sequence is SGGGGSGSGN.

The protein belongs to the protein kinase superfamily. CK1 Ser/Thr protein kinase family. Casein kinase I subfamily. In terms of assembly, monomer. In terms of processing, autophosphorylated.

The protein localises to the cytoplasm. It carries out the reaction L-seryl-[protein] + ATP = O-phospho-L-seryl-[protein] + ADP + H(+). The enzyme catalyses L-threonyl-[protein] + ATP = O-phospho-L-threonyl-[protein] + ADP + H(+). In terms of biological role, casein kinases are operationally defined by their preferential utilization of acidic proteins such as caseins as substrates. It can phosphorylate a large number of proteins. This is Casein kinase 1-like protein 7 from Arabidopsis thaliana (Mouse-ear cress).